A 163-amino-acid chain; its full sequence is ATP synthase subunit b 1 (163 aa).

The helical transmembrane segment at 7-27 (PETWVAIAFVILMGLFAYLGV) threads the bilayer.

Belongs to the ATPase B chain family. In terms of assembly, F-type ATPases have 2 components, F(1) - the catalytic core - and F(0) - the membrane proton channel. F(1) has five subunits: alpha(3), beta(3), gamma(1), delta(1), epsilon(1). F(0) has three main subunits: a(1), b(2) and c(10-14). The alpha and beta chains form an alternating ring which encloses part of the gamma chain. F(1) is attached to F(0) by a central stalk formed by the gamma and epsilon chains, while a peripheral stalk is formed by the delta and b chains.

It is found in the cell inner membrane. Its function is as follows. F(1)F(0) ATP synthase produces ATP from ADP in the presence of a proton or sodium gradient. F-type ATPases consist of two structural domains, F(1) containing the extramembraneous catalytic core and F(0) containing the membrane proton channel, linked together by a central stalk and a peripheral stalk. During catalysis, ATP synthesis in the catalytic domain of F(1) is coupled via a rotary mechanism of the central stalk subunits to proton translocation. In terms of biological role, component of the F(0) channel, it forms part of the peripheral stalk, linking F(1) to F(0). The polypeptide is ATP synthase subunit b 1 (Bradyrhizobium sp. (strain BTAi1 / ATCC BAA-1182)).